The primary structure comprises 124 residues: Fluoride-specific ion channel FluC (124 aa).

Transmembrane regions (helical) follow at residues 4–24, 35–55, 62–82, and 102–122; these read LIFV…ISIF, FGTL…YALG, PEIK…FSTF, and IALN…LVFS. Residues Gly74 and Thr77 each coordinate Na(+).

This sequence belongs to the fluoride channel Fluc/FEX (TC 1.A.43) family.

Its subcellular location is the cell inner membrane. It catalyses the reaction fluoride(in) = fluoride(out). Na(+) is not transported, but it plays an essential structural role and its presence is essential for fluoride channel function. Fluoride-specific ion channel. Important for reducing fluoride concentration in the cell, thus reducing its toxicity. This chain is Fluoride-specific ion channel FluC, found in Shewanella loihica (strain ATCC BAA-1088 / PV-4).